Here is an 833-residue protein sequence, read N- to C-terminus: Histone deacetylase HDA1 (833 aa).

Basic and acidic residues predominate over residues 1-13 (MSTGQEEHLDSKL). Disordered regions lie at residues 1-40 (MSTGQEEHLDSKLENQISEEENQSQNQNFPTAIEDSIQAS) and 760-791 (NGNGNGNNGNSSNGGGNKSADSNGHDDFSKRP). A coiled-coil region spans residues 5 to 52 (QEEHLDSKLENQISEEENQSQNQNFPTAIEDSIQASIEKLDEVDDEIN). Residues 760-776 (NGNGNGNNGNSSNGGGN) are compositionally biased toward gly residues.

The protein belongs to the histone deacetylase family. HD type 2 subfamily. Interacts with BRG1.

It localises to the nucleus. It catalyses the reaction N(6)-acetyl-L-lysyl-[histone] + H2O = L-lysyl-[histone] + acetate. Functionally, responsible for the deacetylation of lysine residues on the N-terminal part of the core histones (H2A, H2B, H3 and H4). Histone deacetylation gives a tag for epigenetic repression and plays an important role in transcriptional regulation, cell cycle progression and developmental events. Histone deacetylases act via the formation of large multiprotein complexes. Deacetylates the YNG2 subunit of NuA4 histone acetyltransferase (HAT) module, leading to the reduction of YNG2 and NuA4 HAT at the promoters of hypha-specific genes. Plays a key role in the regulation of filamentous growth and virulence. Involved in the switch between two heritable states, the white and opaque states. These two cell types differ in many characteristics, including cell structure, mating competence, and virulence. Each state is heritable for many generations, and switching between states occurs stochastically at low frequency. The sequence is that of Histone deacetylase HDA1 (HDA1) from Candida albicans (strain SC5314 / ATCC MYA-2876) (Yeast).